The chain runs to 415 residues: DNA polymerase IV (415 aa).

The region spanning 15–196 (ILHVDMNCFF…LSVEAMHGIG (182 aa)) is the UmuC domain. Mg(2+) contacts are provided by Asp19 and Asp115. Glu116 is a catalytic residue. The span at 235 to 246 (KRAKGTDDREVD) shows a compositional bias: basic and acidic residues. The disordered stretch occupies residues 235–260 (KRAKGTDDREVDPSQMGQHKSVGNSM). Residues 249–260 (QMGQHKSVGNSM) are compositionally biased toward polar residues.

The protein belongs to the DNA polymerase type-Y family. As to quaternary structure, monomer. It depends on Mg(2+) as a cofactor.

It is found in the cytoplasm. It carries out the reaction DNA(n) + a 2'-deoxyribonucleoside 5'-triphosphate = DNA(n+1) + diphosphate. In terms of biological role, poorly processive, error-prone DNA polymerase involved in untargeted mutagenesis. Copies undamaged DNA at stalled replication forks, which arise in vivo from mismatched or misaligned primer ends. These misaligned primers can be extended by PolIV. Exhibits no 3'-5' exonuclease (proofreading) activity. May be involved in translesional synthesis, in conjunction with the beta clamp from PolIII. In Bacillus cereus (strain ATCC 14579 / DSM 31 / CCUG 7414 / JCM 2152 / NBRC 15305 / NCIMB 9373 / NCTC 2599 / NRRL B-3711), this protein is DNA polymerase IV.